Reading from the N-terminus, the 336-residue chain is MLDDRAKLLLKTLVERYIAEGQPVGSRTLSRAPGLDLSPATIRNVMSDLEGLGLITSPHTSAGRIPTARGYRLFVDTMLTAQREHMNAPSHLPPDQPQKVIANAANLLSNLSQFVGVVMTPRRASVFKQIEFLRLSDRRLLVIIVSPDGDVQNRVIFPEADYTQSQLVEASNYINAHYAGLTIEQVRDRLQSEVEKLRGEIAALMQAAVKVSSEVLTEAQEDDVVISGERNLLSVTDFSSDMGQLRRAFELFEQKAQLMRLLDVSSKAEGVRIFIGGESQVVPIEELSIVSANYEVDGQVVGTLGVIGPTRMPYERMIQIVDITSRLVSNALSHRK.

It belongs to the HrcA family.

Functionally, negative regulator of class I heat shock genes (grpE-dnaK-dnaJ and groELS operons). Prevents heat-shock induction of these operons. This Variovorax paradoxus (strain S110) protein is Heat-inducible transcription repressor HrcA.